We begin with the raw amino-acid sequence, 188 residues long: GMP synthase [glutamine-hydrolyzing] subunit A (188 aa).

A Glutamine amidotransferase type-1 domain is found at 2-188 (KIYIIDNGGQ…FKNFIEKCRR (187 aa)). Cys-79 acts as the Nucleophile in catalysis. Residues His-166 and Glu-168 contribute to the active site.

As to quaternary structure, heterodimer composed of a glutamine amidotransferase subunit (A) and a GMP-binding subunit (B).

The catalysed reaction is XMP + L-glutamine + ATP + H2O = GMP + L-glutamate + AMP + diphosphate + 2 H(+). The protein operates within purine metabolism; GMP biosynthesis; GMP from XMP (L-Gln route): step 1/1. Its function is as follows. Catalyzes the synthesis of GMP from XMP. This chain is GMP synthase [glutamine-hydrolyzing] subunit A, found in Picrophilus torridus (strain ATCC 700027 / DSM 9790 / JCM 10055 / NBRC 100828 / KAW 2/3).